The following is a 135-amino-acid chain: ATP synthase epsilon chain (135 aa).

Belongs to the ATPase epsilon chain family. In terms of assembly, F-type ATPases have 2 components, CF(1) - the catalytic core - and CF(0) - the membrane proton channel. CF(1) has five subunits: alpha(3), beta(3), gamma(1), delta(1), epsilon(1). CF(0) has three main subunits: a, b and c.

The protein resides in the cell inner membrane. Its function is as follows. Produces ATP from ADP in the presence of a proton gradient across the membrane. This chain is ATP synthase epsilon chain, found in Brucella suis (strain ATCC 23445 / NCTC 10510).